The sequence spans 582 residues: ATP-dependent lipid A-core flippase (582 aa).

A run of 5 helical transmembrane segments spans residues 16-36, 64-84, 153-173, 253-273, and 275-295; these read LWPT…ALIL, LLWM…TSYI, IIGL…ILVV, PIIQ…ASFP, and VMDS…IALM. The ABC transmembrane type-1 domain occupies 28–310; the sequence is IVAGIALILN…LTNVNAQFQR (283 aa). One can recognise an ABC transporter domain in the interval 342 to 578; it reads LEFRNVTFTY…HGVYAQLHKM (237 aa). Position 376–383 (376–383) interacts with ATP; it reads GRSGSGKS.

Belongs to the ABC transporter superfamily. Lipid exporter (TC 3.A.1.106) family. As to quaternary structure, homodimer.

It is found in the cell inner membrane. It carries out the reaction ATP + H2O + lipid A-core oligosaccharideSide 1 = ADP + phosphate + lipid A-core oligosaccharideSide 2.. In terms of biological role, involved in lipopolysaccharide (LPS) biosynthesis. Translocates lipid A-core from the inner to the outer leaflet of the inner membrane. Transmembrane domains (TMD) form a pore in the inner membrane and the ATP-binding domain (NBD) is responsible for energy generation. In Salmonella choleraesuis (strain SC-B67), this protein is ATP-dependent lipid A-core flippase.